The primary structure comprises 53 residues: UPF0391 membrane protein msr4317 (53 aa).

2 helical membrane passes run 4 to 24 and 33 to 53; these read WIII…PALA and ILIG…FAVT.

The protein belongs to the UPF0391 family.

It localises to the cell membrane. The chain is UPF0391 membrane protein msr4317 from Mesorhizobium japonicum (strain LMG 29417 / CECT 9101 / MAFF 303099) (Mesorhizobium loti (strain MAFF 303099)).